The chain runs to 299 residues: Coenzyme PQQ synthesis protein B (299 aa).

It belongs to the PqqB family.

The protein operates within cofactor biosynthesis; pyrroloquinoline quinone biosynthesis. In terms of biological role, may be involved in the transport of PQQ or its precursor to the periplasm. This is Coenzyme PQQ synthesis protein B from Xanthomonas oryzae pv. oryzae (strain MAFF 311018).